The sequence spans 232 residues: Rho-related GTP-binding protein Rho6 (232 aa).

GTP-binding positions include 23-28 (QCGKTA), 38-45 (YPETYVPT), 67-71 (DTSGS), 125-128 (CKTD), and 169-170 (AF). Positions 42–50 (YVPTVFENY) match the Effector region motif. C229 carries the cysteine methyl ester modification. A lipid anchor (S-geranylgeranyl cysteine) is attached at C229. Positions 230–232 (SIM) are cleaved as a propeptide — removed in mature form.

It belongs to the small GTPase superfamily. Rho family. Binds GRB7 and PLXNB1. Interacts with PLXNA2. Interacts with UBXD5.

The protein resides in the cell membrane. The protein localises to the cytoplasm. Its subcellular location is the cytoskeleton. In terms of biological role, lacks intrinsic GTPase activity. Has a low affinity for GDP, and constitutively binds GTP. Controls rearrangements of the actin cytoskeleton. Induces the Rac-dependent neuritic process formation in part by disruption of the cortical actin filaments. Causes the formation of many neuritic processes from the cell body with disruption of the cortical actin filaments. This is Rho-related GTP-binding protein Rho6 (RND1) from Bos taurus (Bovine).